A 584-amino-acid polypeptide reads, in one-letter code: Arginine--tRNA ligase (584 aa).

Positions 127–137 match the 'HIGH' region motif; sequence PNTNKPLHIGH.

This sequence belongs to the class-I aminoacyl-tRNA synthetase family. As to quaternary structure, monomer.

The protein resides in the cytoplasm. It carries out the reaction tRNA(Arg) + L-arginine + ATP = L-arginyl-tRNA(Arg) + AMP + diphosphate. This chain is Arginine--tRNA ligase, found in Borrelia hermsii (strain HS1 / DAH).